The primary structure comprises 181 residues: ADP-ribosylation factor-like protein 1 (181 aa).

A lipid anchor (N-myristoyl glycine) is attached at Gly2. Residues 24–31, 45–48, Gly70, 126–129, and 160–161 each bind GTP; these read GLDGAGKT, TIPT, NKQD, and AT. Positions 31 and 48 each coordinate Mg(2+).

This sequence belongs to the small GTPase superfamily. Arf family. As to quaternary structure, the GTP-bound form interacts with GOLGA1. The GTP-bound form interacts with GOLGA4 and RGPD8. The GTP-bound form directly interacts with ARFIP2. Binds to SCOC, preferentially in its GTP-bound form. May interact with UNC119. Interacts with ARFIP1; this interaction directs ARFIP1 to the trans-Golgi membranes. Interacts with ARFGEF1 (via N-terminus). As to expression, detected in heart, liver, lung and liver (at protein level). Detected in fetal heart, lung, liver and kidney. Detected in adult heart, placenta, lung, liver, skeletal muscle, kidney and pancreas.

It localises to the golgi apparatus membrane. Its subcellular location is the golgi apparatus. It is found in the trans-Golgi network membrane. The protein resides in the membrane. Functionally, GTP-binding protein that recruits several effectors, such as golgins, arfaptins and Arf-GEFs to the trans-Golgi network, and modulates their functions at the Golgi complex. Plays thereby a role in a wide range of fundamental cellular processes, including cell polarity, innate immunity, or protein secretion mediated by arfaptins, which were shown to play a role in maintaining insulin secretion from pancreatic beta cells. The chain is ADP-ribosylation factor-like protein 1 (ARL1) from Homo sapiens (Human).